Consider the following 881-residue polypeptide: Serine/threonine-protein phosphatase BSL1 (881 aa).

Kelch repeat units lie at residues 60–109 (GSSS…AVGT), 269–320 (RLHV…DQDP), and 338–385 (RIYV…PRFS). 2 disordered regions span residues 368 to 407 (SPLL…LSLD) and 436 to 464 (AGTL…ANEG). Composition is skewed to polar residues over residues 374–383 (DRTQQSSTPR) and 445–460 (TSDA…TDGT). At Ser491 the chain carries Phosphoserine. The segment at 503–522 (VPMNNSDVPQPTKKFTRQKS) is disordered. Residues Asp584, His586, Asp618, and Asn650 each coordinate Mn(2+). The Proton donor role is filled by His651. Residues His703 and His782 each contribute to the Mn(2+) site. Residues 837–881 (ILSPENSPEHSGDDAWMQELNIQRPPTPTRGRPQPDFDRSSLAYI) are disordered. Ser839 bears the Phosphoserine mark.

The protein belongs to the PPP phosphatase family. BSU subfamily. Interacts with CDG1 and CDL1. Mn(2+) serves as cofactor. Expressed in mature cauline leaves and at the tip of influorescence, including flowers. Expressed at lower level in young tissues relative to older ones.

It is found in the nucleus. The enzyme catalyses O-phospho-L-seryl-[protein] + H2O = L-seryl-[protein] + phosphate. It catalyses the reaction O-phospho-L-threonyl-[protein] + H2O = L-threonyl-[protein] + phosphate. Its function is as follows. Phosphatase involved in elongation process, probably by acting as a regulator of brassinolide signaling. This Arabidopsis thaliana (Mouse-ear cress) protein is Serine/threonine-protein phosphatase BSL1 (BSL1).